Reading from the N-terminus, the 297-residue chain is HTH-type transcriptional regulator ArgP (297 aa).

In terms of domain architecture, HTH lysR-type spans 4 to 60 (PDYRTLQALDAVIRERGFERAAQKLCITQSAVSQRIKQLENMFGQPLLVRTVPPRPT). A DNA-binding region (H-T-H motif) is located at residues 21-40 (FERAAQKLCITQSAVSQRIK).

The protein belongs to the LysR transcriptional regulatory family. As to quaternary structure, homodimer.

Its function is as follows. Controls the transcription of genes involved in arginine and lysine metabolism. In Enterobacter sp. (strain 638), this protein is HTH-type transcriptional regulator ArgP.